We begin with the raw amino-acid sequence, 89 residues long: Extender of the chronological lifespan protein ecl3 (89 aa).

The protein belongs to the ecl1 family.

It localises to the nucleus. Its function is as follows. Involved in chronological cell aging. This chain is Extender of the chronological lifespan protein ecl3 (ecl3), found in Schizosaccharomyces pombe (strain 972 / ATCC 24843) (Fission yeast).